The following is a 155-amino-acid chain: Ribosome maturation factor RimP (155 aa).

It belongs to the RimP family.

It is found in the cytoplasm. Required for maturation of 30S ribosomal subunits. The chain is Ribosome maturation factor RimP from Staphylococcus carnosus (strain TM300).